The following is a 284-amino-acid chain: Diaminopimelate epimerase (284 aa).

Substrate contacts are provided by asparagine 14 and asparagine 67. Residue cysteine 76 is the Proton donor of the active site. Substrate is bound by residues 77–78 (GN), asparagine 166, asparagine 199, and 217–218 (ER). The Proton acceptor role is filled by cysteine 226. 227–228 (GT) serves as a coordination point for substrate.

It belongs to the diaminopimelate epimerase family. As to quaternary structure, homodimer.

Its subcellular location is the cytoplasm. It catalyses the reaction (2S,6S)-2,6-diaminopimelate = meso-2,6-diaminopimelate. The protein operates within amino-acid biosynthesis; L-lysine biosynthesis via DAP pathway; DL-2,6-diaminopimelate from LL-2,6-diaminopimelate: step 1/1. Functionally, catalyzes the stereoinversion of LL-2,6-diaminopimelate (L,L-DAP) to meso-diaminopimelate (meso-DAP), a precursor of L-lysine and an essential component of the bacterial peptidoglycan. The chain is Diaminopimelate epimerase from Bacillus subtilis (strain 168).